A 342-amino-acid polypeptide reads, in one-letter code: Oxygen-dependent coproporphyrinogen-III oxidase (342 aa).

Ser98 provides a ligand contact to substrate. Residues His102 and His112 each coordinate a divalent metal cation. Catalysis depends on His112, which acts as the Proton donor. Residue Asn114–Arg116 coordinates substrate. The a divalent metal cation site is built by His146 and His176. The important for dimerization stretch occupies residues Tyr266–Glu301.

This sequence belongs to the aerobic coproporphyrinogen-III oxidase family. In terms of assembly, homodimer. A divalent metal cation is required as a cofactor.

Its subcellular location is the cytoplasm. The catalysed reaction is coproporphyrinogen III + O2 + 2 H(+) = protoporphyrinogen IX + 2 CO2 + 2 H2O. The protein operates within porphyrin-containing compound metabolism; protoporphyrin-IX biosynthesis; protoporphyrinogen-IX from coproporphyrinogen-III (O2 route): step 1/1. In terms of biological role, involved in the heme and chlorophyll biosynthesis. Catalyzes the aerobic oxidative decarboxylation of propionate groups of rings A and B of coproporphyrinogen-III to yield the vinyl groups in protoporphyrinogen-IX. The chain is Oxygen-dependent coproporphyrinogen-III oxidase from Prochlorococcus marinus (strain AS9601).